We begin with the raw amino-acid sequence, 265 residues long: Protein IL-40 (265 aa).

Residues 1 to 20 (MGLPGLFCLAVLAASSFSKA) form the signal peptide. N-linked (GlcNAc...) asparagine glycans are attached at residues N86 and N132.

In terms of tissue distribution, expressed in fetal liver and bone marrow. Expressed in peripheral blood lymphocyte B cells.

It is found in the secreted. Functionally, probable B cell-associated cytokine that plays a role in the regulation of humoral immune responses. Involved in lymphocyte B cell development and immunoglobulin/IgA production. This is Protein IL-40 from Homo sapiens (Human).